The sequence spans 49 residues: MKKKVTLACKNCGSRNYTTMKSSAALAERLEVKKYCNNCNSHTVHLETK.

Belongs to the bacterial ribosomal protein bL33 family.

This is Large ribosomal subunit protein bL33B (rpmGB) from Bacillus licheniformis.